The chain runs to 115 residues: Large ribosomal subunit protein bL19 (115 aa).

The protein belongs to the bacterial ribosomal protein bL19 family.

Its function is as follows. This protein is located at the 30S-50S ribosomal subunit interface and may play a role in the structure and function of the aminoacyl-tRNA binding site. This is Large ribosomal subunit protein bL19 from Nitrosococcus oceani (strain ATCC 19707 / BCRC 17464 / JCM 30415 / NCIMB 11848 / C-107).